The sequence spans 133 residues: Magnetosome protein MamC (133 aa).

Residues 1 to 5 are Cytoplasmic-facing; that stretch reads MAAFN. A helical transmembrane segment spans residues 6 to 26; it reads LALYLSKSIPGVGVLGGVIGG. Residues 27–67 are Lumenal-facing; that stretch reads SAALAKNLKAKQRGEITTEEAVIDTGKEALGAGLATTVSAY. The interval 37–57 is magnetite interacting component (MIC) binds magnetite; sequence KQRGEITTEEAVIDTGKEALG. The helical transmembrane segment at 68 to 88 threads the bilayer; it reads AAGVVGGGLVVSLGTAFAVAV. Over 89–133 the chain is Cytoplasmic; sequence AGKYAWDYGMEQMEAKLQEKKHQEQGGQTYGDNPDPFDPQELETP. The segment at 105–133 is disordered; the sequence is LQEKKHQEQGGQTYGDNPDPFDPQELETP.

It belongs to the magnetosome MamC family. As to quaternary structure, probably interacts with MamA.

It is found in the magnetosome membrane. Functionally, probably helps control the size of magnetite crystals; in vitro synthesis of magnetite yields larger and more well-developed magnetite crystals in the presence of purified MamC. Binds Fe(3+). The lumenal domain probably binds magnetite crystals, affecting crystal size and shape. Purified MamC self-assembles into micelles in the presence of ferric chloride hexahydrate (FeCl(3).6H(2)O); both oxygen and iron are present in the proteinaceous micelles. Whether this is relevant in vivo is unknown. In Magnetococcus marinus (strain ATCC BAA-1437 / JCM 17883 / MC-1), this protein is Magnetosome protein MamC.